A 160-amino-acid chain; its full sequence is Crossover junction endodeoxyribonuclease RuvC (160 aa).

Residues Asp7, Glu67, and Asp138 contribute to the active site. Positions 7, 67, and 138 each coordinate Mg(2+).

This sequence belongs to the RuvC family. Homodimer which binds Holliday junction (HJ) DNA. The HJ becomes 2-fold symmetrical on binding to RuvC with unstacked arms; it has a different conformation from HJ DNA in complex with RuvA. In the full resolvosome a probable DNA-RuvA(4)-RuvB(12)-RuvC(2) complex forms which resolves the HJ. The cofactor is Mg(2+).

It is found in the cytoplasm. The enzyme catalyses Endonucleolytic cleavage at a junction such as a reciprocal single-stranded crossover between two homologous DNA duplexes (Holliday junction).. In terms of biological role, the RuvA-RuvB-RuvC complex processes Holliday junction (HJ) DNA during genetic recombination and DNA repair. Endonuclease that resolves HJ intermediates. Cleaves cruciform DNA by making single-stranded nicks across the HJ at symmetrical positions within the homologous arms, yielding a 5'-phosphate and a 3'-hydroxyl group; requires a central core of homology in the junction. The consensus cleavage sequence is 5'-(A/T)TT(C/G)-3'. Cleavage occurs on the 3'-side of the TT dinucleotide at the point of strand exchange. HJ branch migration catalyzed by RuvA-RuvB allows RuvC to scan DNA until it finds its consensus sequence, where it cleaves and resolves the cruciform DNA. The protein is Crossover junction endodeoxyribonuclease RuvC of Brachyspira hyodysenteriae (strain ATCC 49526 / WA1).